Reading from the N-terminus, the 380-residue chain is Putative ankyrin repeat protein RF_1306 (380 aa).

ANK repeat units follow at residues 48 to 76, 80 to 109, 112 to 143, 170 to 199, 203 to 233, 239 to 268, 270 to 299, 303 to 333, and 337 to 366; these read NKWS…NINA, KCRT…KIAP, YGWS…KYDK, NNKT…KFDI, LGYK…GKNT, LEKV…GFDK, LGQK…DAQY, LGRS…DINY, and SGLN…YESY.

The sequence is that of Putative ankyrin repeat protein RF_1306 from Rickettsia felis (strain ATCC VR-1525 / URRWXCal2) (Rickettsia azadi).